The primary structure comprises 105 residues: Co-chaperonin GroES 3 (105 aa).

This sequence belongs to the GroES chaperonin family. In terms of assembly, heptamer of 7 subunits arranged in a ring. Interacts with the chaperonin GroEL.

Its subcellular location is the cytoplasm. Together with the chaperonin GroEL, plays an essential role in assisting protein folding. The GroEL-GroES system forms a nano-cage that allows encapsulation of the non-native substrate proteins and provides a physical environment optimized to promote and accelerate protein folding. GroES binds to the apical surface of the GroEL ring, thereby capping the opening of the GroEL channel. The chain is Co-chaperonin GroES 3 from Rhizobium meliloti (strain 1021) (Ensifer meliloti).